A 419-amino-acid polypeptide reads, in one-letter code: Probable dual-specificity RNA methyltransferase RlmN (419 aa).

The tract at residues 1–21 is disordered; sequence MTAESDSPDGPVSAGTGRPVR. The active-site Proton acceptor is the glutamate 124. A Radical SAM core domain is found at 130–369; that stretch reads YPDRATVCVS…ATTVRDTRGR (240 aa). The cysteines at positions 137 and 375 are disulfide-linked. Residues cysteine 144, cysteine 148, and cysteine 151 each contribute to the [4Fe-4S] cluster site. S-adenosyl-L-methionine-binding positions include 199-200, serine 233, 256-258, and asparagine 332; these read GE and SLH. Cysteine 375 functions as the S-methylcysteine intermediate in the catalytic mechanism. Residues 383–419 form a disordered region; sequence AGRARRVESARPVESARPVGVAGAASGSPAHGSRVLR. Low complexity predominate over residues 397–419; sequence SARPVGVAGAASGSPAHGSRVLR.

It belongs to the radical SAM superfamily. RlmN family. It depends on [4Fe-4S] cluster as a cofactor.

The protein localises to the cytoplasm. It catalyses the reaction adenosine(2503) in 23S rRNA + 2 reduced [2Fe-2S]-[ferredoxin] + 2 S-adenosyl-L-methionine = 2-methyladenosine(2503) in 23S rRNA + 5'-deoxyadenosine + L-methionine + 2 oxidized [2Fe-2S]-[ferredoxin] + S-adenosyl-L-homocysteine. It carries out the reaction adenosine(37) in tRNA + 2 reduced [2Fe-2S]-[ferredoxin] + 2 S-adenosyl-L-methionine = 2-methyladenosine(37) in tRNA + 5'-deoxyadenosine + L-methionine + 2 oxidized [2Fe-2S]-[ferredoxin] + S-adenosyl-L-homocysteine. Its function is as follows. Specifically methylates position 2 of adenine 2503 in 23S rRNA and position 2 of adenine 37 in tRNAs. The protein is Probable dual-specificity RNA methyltransferase RlmN of Frankia alni (strain DSM 45986 / CECT 9034 / ACN14a).